Reading from the N-terminus, the 53-residue chain is LALLFLVLSAGSGISGPLSCRRKGGICILIRCPGPMRQIGTCFGRPVKCCRSW.

Cystine bridges form between C20-C49, C27-C42, and C32-C50.

This sequence belongs to the beta-defensin family.

The protein localises to the secreted. Functionally, has bactericidal activity. The chain is Beta-defensin C7 from Bos taurus (Bovine).